The following is a 630-amino-acid chain: A-type voltage-gated potassium channel KCND2 (630 aa).

Residues 1-184 are Cytoplasmic-facing; sequence MAAGVAAWLP…FENPHTSTMA (184 aa). The interaction with KCNIP1, KCNIP2, and other family members stretch occupies residues 2 to 20; it reads AAGVAAWLPFARAAAIGWM. At T38 the chain carries Phosphothreonine. Residues 71–90 form an interaction with KCNIP1 region; sequence ERDFFYHPETQQYFFDRDPD. Residues H105, C111, C132, and C133 each contribute to the Zn(2+) site. The chain crosses the membrane as a helical span at residues 185-206; sequence LVFYYVTGFFIAVSVIANVVET. Residues 207–226 are Extracellular-facing; that stretch reads VPCGSSPGHIKELPCGERYA. The chain crosses the membrane as a helical span at residues 227–249; that stretch reads VAFFCLDTACVMIFTVEYLLRLA. At 250-256 the chain is on the cytoplasmic side; sequence AAPSRYR. A helical transmembrane segment spans residues 257–281; that stretch reads FVRSVMSIIDVVAILPYYIGLVMTD. The Extracellular portion of the chain corresponds to 282-287; it reads NEDVSG. A helical; Voltage-sensor transmembrane segment spans residues 288–307; the sequence is AFVTLRVFRVFRIFKFSRHS. The Cytoplasmic segment spans residues 308-321; that stretch reads QGLRILGYTLKSCA. Residues 308–321 are S4-S5 linker; sequence QGLRILGYTLKSCA. Residues 322-345 form a helical membrane-spanning segment; the sequence is SELGFLLFSLTMAIIIFATVMFYA. The Extracellular portion of the chain corresponds to 346 to 357; it reads EKGSSASKFTSI. An intramembrane region (helical) is located at residues 358–369; that stretch reads PAAFWYTIVTMT. K(+) is bound by residues T370, L371, G372, and Y373. Residues 370–375 carry the Selectivity filter motif; it reads TLGYGD. An intramembrane segment occupies 370 to 377; it reads TLGYGDMV. The Extracellular portion of the chain corresponds to 378-380; sequence PKT. Residues 381–403 traverse the membrane as a helical segment; that stretch reads IAGKIFGSICSLSGVLVIALPVP. Residues 404–630 are Cytoplasmic-facing; that stretch reads VIVSNFSRIY…GGNIVRVSAL (227 aa). S438 carries the post-translational modification Phosphoserine. The segment at 474-489 is required for dendritic targeting; sequence FETQHHHLLHCLEKTT. The interval 474-630 is important for normal channel activation and inactivation, for interaction with KCNIP2, and probably other family members as well; it reads FETQHHHLLH…GGNIVRVSAL (157 aa). Phosphoserine occurs at positions 548, 552, 572, and 575. Residues 600 to 623 form a disordered region; sequence IPTPPVTTPEGDDRPESPEYSGGN. T602 and T607 each carry phosphothreonine. Residue S616 is modified to Phosphoserine. The PDZ-binding motif lies at 627–630; sequence VSAL.

The protein belongs to the potassium channel family. D (Shal) (TC 1.A.1.2) subfamily. Kv4.2/KCND2 sub-subfamily. Homotetramer or heterotetramer with KCND1 or KCND3. Associates with the regulatory subunits KCNIP2, KCNIP3 and KCNIP4. Interacts with the regulatory subunit KCNIP1; this interaction mediates the capture of both the N- and C-terminus of KCND2, preventing N-type inactivation and stabilizing the S6 conformation, thereby accelerating closed state inactivation and recovery. Interacts with DPP10, DLG4 and DLG1. In vivo, probably exists as heteromeric complex containing variable proportions of KCND1, KCND2, KCND3, KCNIP1, KCNIP2, KCNIP3, KCNIP4, DPP6 and DPP10. The tetrameric channel can associate with up to four regulatory subunits, such as KCNIP2 or KCNIP4. Interaction with KCNIP3 promotes tetramerization and formation of a functional potassium channel. Interaction with four KCNIP4 chains does not reduce interaction with DPP10. Probably part of a complex consisting of KCNIP1, KCNIP2 isoform 3 and KCND2. Interacts with FLNA and FLNC. Interacts with NCS1/FREQ. Identified in a complex with cAMP-dependent protein kinase (PKA), CAV3, AKAP6 and KCND3 in cardiac myocytes. Interacts (via S1 and S2 helices) with DPP6; this interaction stabilizes the conformation of the S1-S2 helices and facilitates S4 conformational change, including S4 sliding up and down, thereby accelerating activation, inactivation, and recovery. Phosphorylation at Ser-438 in response to MAPK activation is increased in stimulated dendrites. Interaction with KCNIP2 and DPP6 propomtes phosphorylation by PKA at Ser-552. Phosphorylation at Ser-552 has no effect on interaction with KCNIP3, but is required for the regulation of channel activity by KCNIP3. Phosphorylation at Ser-552 leads to KCND2 internalization. Phosphorylated by MAPK in response to signaling via the metabotropic glutamate receptor GRM5. Phosphorylation at Ser-616 is required for the down-regulation of neuronal A-type currents in response to signaling via GRM5. In terms of tissue distribution, detected in brain cortex, hippocampus, dentate gyrus, thalamus and cerebellum. Detected in neurons from the primary visual cortex. Detected in the supraoptic nucleus in hypothalamus, in hippocampus and the habenular nucleus of the thalamus. Detected in the bed nucleus of the stria terminalis. Detected in dendritic fields in the hippocampus CA1 layer, in stratum radiatum, stratum oriens, stratum lacunosum-moleculare and stratum pyramidale. Detected in dendritic fields in the hippocampus CA3 layer and in dentate gyrus. Detected in the cerebellum granule cell layer, where it localizes at synapses. Detected in the main olfactory bulb, especially in the granule cell layer and the external plexiform layer, but also the mitral layer. Detected in heart atrium and ventricle. Detected in heart left ventricle (at protein level). Highly expressed in heart and throughout the brain, with similar levels in cortex and hypothalamus, and much higher levels in hippocampus, dentate gyrus and the habenular nucleus of the thalamus. Detected in brain, and at lower levels in heart atrium and ventricle. Detected in neurons from the bed nucleus of the stria terminalis. Detected in aorta, cardiac and smooth muscle.

It is found in the cell membrane. The protein resides in the cell projection. The protein localises to the dendrite. It localises to the synapse. Its subcellular location is the perikaryon. It is found in the postsynaptic cell membrane. The protein resides in the dendritic spine. The protein localises to the sarcolemma. It localises to the cell junction. Its subcellular location is the membrane. It is found in the caveola. It carries out the reaction K(+)(in) = K(+)(out). Inhibited by 5 mM 4-aminopyridine (4-AP). Not inhibited by dendrotoxins and by tetraethylammonium (TEA). Inhibited by 10 mM flecainide and 20 mM quinidine. Inhibited by the heteropodatoxins HpTx(1), HpTx(2), and HpTx(3). Its function is as follows. Voltage-gated potassium channel that mediates transmembrane potassium transport in excitable membranes, primarily in the brain, but also in rodent heart. Mediates the major part of the dendritic A-type current I(SA) in brain neurons. This current is activated at membrane potentials that are below the threshold for action potentials. It regulates neuronal excitability, prolongs the latency before the first spike in a series of action potentials, regulates the frequency of repetitive action potential firing, shortens the duration of action potentials and regulates the back-propagation of action potentials from the neuronal cell body to the dendrites. Contributes to the regulation of the circadian rhythm of action potential firing in suprachiasmatic nucleus neurons, which regulates the circadian rhythm of locomotor activity. Functions downstream of the metabotropic glutamate receptor GRM5 and plays a role in neuronal excitability and in nociception mediated by activation of GRM5. Mediates the transient outward current I(to) in rodent heart left ventricle apex cells, but not in human heart, where this current is mediated by another family member. Forms tetrameric potassium-selective channels through which potassium ions pass in accordance with their electrochemical gradient. The channel alternates between opened and closed conformations in response to the voltage difference across the membrane. Can form functional homotetrameric channels and heterotetrameric channels that contain variable proportions of KCND2 and KCND3; channel properties depend on the type of pore-forming alpha subunits that are part of the channel. In vivo, membranes probably contain a mixture of heteromeric potassium channel complexes. Interaction with specific isoforms of the regulatory subunits KCNIP1, KCNIP2, KCNIP3 or KCNIP4 strongly increases expression at the cell surface and thereby increases channel activity; it modulates the kinetics of channel activation and inactivation, shifts the threshold for channel activation to more negative voltage values, shifts the threshold for inactivation to less negative voltages and accelerates recovery after inactivation. Likewise, interaction with DPP6 or DPP10 promotes expression at the cell membrane and regulates both channel characteristics and activity. Upon depolarization, the channel goes from a resting closed state (C state) to an activated but non-conducting state (C* state), from there, the channel may either inactivate (I state) or open (O state). The polypeptide is A-type voltage-gated potassium channel KCND2 (Rattus norvegicus (Rat)).